The following is a 1498-amino-acid chain: DNA-directed RNA polymerase subunit beta' (1498 aa).

4 residues coordinate Zn(2+): C67, C69, C82, and C85. D499, D501, and D503 together coordinate Mg(2+). Zn(2+)-binding residues include C867, C943, C950, and C953.

It belongs to the RNA polymerase beta' chain family. In terms of assembly, the RNAP catalytic core consists of 2 alpha, 1 beta, 1 beta' and 1 omega subunit. When a sigma factor is associated with the core the holoenzyme is formed, which can initiate transcription. The cofactor is Mg(2+). It depends on Zn(2+) as a cofactor.

The catalysed reaction is RNA(n) + a ribonucleoside 5'-triphosphate = RNA(n+1) + diphosphate. In terms of biological role, DNA-dependent RNA polymerase catalyzes the transcription of DNA into RNA using the four ribonucleoside triphosphates as substrates. This chain is DNA-directed RNA polymerase subunit beta', found in Chlorobium phaeobacteroides (strain BS1).